The chain runs to 257 residues: Leucine-rich repeat-containing protein 3 (257 aa).

The first 32 residues, 1–32 (MGPRGRQSPSSPLAPSQGSCFFILFCLRLGAS), serve as a signal peptide directing secretion. The LRRNT domain occupies 33–64 (CPQSCQCPDHAGAVAVHCSSRGLQEIPRDIPA). 3 LRR repeats span residues 65–86 (NTVLLKLDANRISRVPNGAFQH), 89–110 (QLRELDLSHNAIEAIGPAAFSG), and 114–135 (GLRLLDLSHNRIRRIPKDALGK). An LRRCT domain is found at 145 to 198 (NPLHCECALQEALWELKLDPDSVDEIACHTSAQEQFVGKPLIQVLDSGASFCST). A helical transmembrane segment spans residues 205 to 225 (VAMLVTMFGWFTMVIAYVVYY).

The protein belongs to the LRRC3 family.

It is found in the membrane. This is Leucine-rich repeat-containing protein 3 (Lrrc3) from Rattus norvegicus (Rat).